Consider the following 501-residue polypeptide: Ribose import ATP-binding protein RbsA (501 aa).

ABC transporter domains follow at residues 5 to 241 (LQLK…VGRK) and 252 to 495 (APGE…VGKL). 37 to 44 (GENGAGKS) contributes to the ATP binding site.

This sequence belongs to the ABC transporter superfamily. Ribose importer (TC 3.A.1.2.1) family. As to quaternary structure, the complex is composed of an ATP-binding protein (RbsA), two transmembrane proteins (RbsC) and a solute-binding protein (RbsB).

The protein localises to the cell inner membrane. It carries out the reaction D-ribose(out) + ATP + H2O = D-ribose(in) + ADP + phosphate + H(+). In terms of biological role, part of the ABC transporter complex RbsABC involved in ribose import. Responsible for energy coupling to the transport system. This chain is Ribose import ATP-binding protein RbsA, found in Salmonella typhimurium (strain LT2 / SGSC1412 / ATCC 700720).